The chain runs to 363 residues: Fructose-bisphosphate aldolase C (363 aa).

Residue Y5 is modified to Phosphotyrosine. S36, S39, and S45 each carry phosphoserine. Position 56 (R56) interacts with substrate. At K111 the chain carries N6-acetyllysine. Residue K147 participates in substrate binding. E188 functions as the Proton acceptor in the catalytic mechanism. K230 (schiff-base intermediate with dihydroxyacetone-P) is an active-site residue.

This sequence belongs to the class I fructose-bisphosphate aldolase family. Homotetramer. Interacts with ATP6V1E1. As to expression, high expression in the adult brain.

The enzyme catalyses beta-D-fructose 1,6-bisphosphate = D-glyceraldehyde 3-phosphate + dihydroxyacetone phosphate. It participates in carbohydrate degradation; glycolysis; D-glyceraldehyde 3-phosphate and glycerone phosphate from D-glucose: step 4/4. This Rattus norvegicus (Rat) protein is Fructose-bisphosphate aldolase C (Aldoc).